A 198-amino-acid polypeptide reads, in one-letter code: Recombination protein RecR (198 aa).

Residues 57-72 (CPVCFNITDAERCDVC) form a C4-type zinc finger. Residues 80 to 173 (NLICVVEEPG…VVSRIAYGLP (94 aa)) enclose the Toprim domain.

This sequence belongs to the RecR family.

May play a role in DNA repair. It seems to be involved in an RecBC-independent recombinational process of DNA repair. It may act with RecF and RecO. This Deinococcus deserti (strain DSM 17065 / CIP 109153 / LMG 22923 / VCD115) protein is Recombination protein RecR.